The primary structure comprises 468 residues: Ribulose bisphosphate carboxylase large chain (468 aa).

Position 7 is an N6,N6,N6-trimethyllysine (K7). Substrate contacts are provided by N116 and T166. K168 (proton acceptor) is an active-site residue. A substrate-binding site is contributed by K170. Mg(2+) contacts are provided by K194, D196, and E197. K194 is subject to N6-carboxylysine. H287 functions as the Proton acceptor in the catalytic mechanism. Residues R288, H320, and S372 each coordinate substrate.

Belongs to the RuBisCO large chain family. Type I subfamily. In terms of assembly, heterohexadecamer of 8 large chains and 8 small chains. Mg(2+) is required as a cofactor.

The protein localises to the plastid. The protein resides in the chloroplast. It carries out the reaction 2 (2R)-3-phosphoglycerate + 2 H(+) = D-ribulose 1,5-bisphosphate + CO2 + H2O. The catalysed reaction is D-ribulose 1,5-bisphosphate + O2 = 2-phosphoglycolate + (2R)-3-phosphoglycerate + 2 H(+). RuBisCO catalyzes two reactions: the carboxylation of D-ribulose 1,5-bisphosphate, the primary event in carbon dioxide fixation, as well as the oxidative fragmentation of the pentose substrate in the photorespiration process. Both reactions occur simultaneously and in competition at the same active site. The polypeptide is Ribulose bisphosphate carboxylase large chain (Couroupita guianensis (Cannonball tree)).